The primary structure comprises 316 residues: Thymidylate synthase (316 aa).

DUMP-binding positions include Arg-23 and 178–179 (RR). Catalysis depends on Cys-198, which acts as the Nucleophile. DUMP-binding positions include 218–221 (RSAD), Asn-229, and 259–261 (HLY). (6R)-5,10-methylene-5,6,7,8-tetrahydrofolate is bound at residue Asp-221. Ala-315 lines the (6R)-5,10-methylene-5,6,7,8-tetrahydrofolate pocket.

It belongs to the thymidylate synthase family. Bacterial-type ThyA subfamily. As to quaternary structure, homodimer.

It is found in the cytoplasm. The enzyme catalyses dUMP + (6R)-5,10-methylene-5,6,7,8-tetrahydrofolate = 7,8-dihydrofolate + dTMP. It functions in the pathway pyrimidine metabolism; dTTP biosynthesis. In terms of biological role, catalyzes the reductive methylation of 2'-deoxyuridine-5'-monophosphate (dUMP) to 2'-deoxythymidine-5'-monophosphate (dTMP) while utilizing 5,10-methylenetetrahydrofolate (mTHF) as the methyl donor and reductant in the reaction, yielding dihydrofolate (DHF) as a by-product. This enzymatic reaction provides an intracellular de novo source of dTMP, an essential precursor for DNA biosynthesis. The protein is Thymidylate synthase of Lacticaseibacillus paracasei (strain ATCC 334 / BCRC 17002 / CCUG 31169 / CIP 107868 / KCTC 3260 / NRRL B-441) (Lactobacillus paracasei).